Here is a 61-residue protein sequence, read N- to C-terminus: Probable tautomerase stu1128 (61 aa).

P2 acts as the Proton acceptor; via imino nitrogen in catalysis.

Belongs to the 4-oxalocrotonate tautomerase family.

This is Probable tautomerase stu1128 from Streptococcus thermophilus (strain ATCC BAA-250 / LMG 18311).